Reading from the N-terminus, the 72-residue chain is SRY-related protein ADW4 (72 aa).

Residues 1–69 constitute a DNA-binding region (HMG box); the sequence is VKRPMNAFMV…KHMADYPNYK (69 aa).

The protein resides in the nucleus. This chain is SRY-related protein ADW4, found in Alligator mississippiensis (American alligator).